The chain runs to 214 residues: 14-3-3 protein homolog 2 (214 aa).

It belongs to the 14-3-3 family.

This chain is 14-3-3 protein homolog 2, found in Schistosoma mansoni (Blood fluke).